A 149-amino-acid polypeptide reads, in one-letter code: Large ribosomal subunit protein bL9 (149 aa).

The protein belongs to the bacterial ribosomal protein bL9 family.

In terms of biological role, binds to the 23S rRNA. The polypeptide is Large ribosomal subunit protein bL9 (Thermotoga petrophila (strain ATCC BAA-488 / DSM 13995 / JCM 10881 / RKU-1)).